We begin with the raw amino-acid sequence, 429 residues long: High mobility group nucleosome-binding domain-containing protein 5 (429 aa).

The segment at 1 to 429 (MPKRKAAGDA…GEKGEPVSTV (429 aa)) is disordered. Thr-29 bears the Phosphothreonine mark. A compositionally biased stretch (basic residues) spans 35–44 (KRASTSRKTK). Lys-64 is covalently cross-linked (Glycyl lysine isopeptide (Lys-Gly) (interchain with G-Cter in SUMO2)). Position 90 is a phosphoserine (Ser-90). Composition is skewed to basic and acidic residues over residues 92–101 (METEEVKEQI) and 109–124 (GGEK…KNDE). Lys-98 participates in a covalent cross-link: Glycyl lysine isopeptide (Lys-Gly) (interchain with G-Cter in SUMO1); alternate. Lys-98 is covalently cross-linked (Glycyl lysine isopeptide (Lys-Gly) (interchain with G-Cter in SUMO2); alternate). Residue Lys-121 forms a Glycyl lysine isopeptide (Lys-Gly) (interchain with G-Cter in SUMO2) linkage. Residues 133-152 (EKDEDEKEHEDTGEEGEDGE) show a composition bias toward acidic residues. Residues 153-195 (REGGLKEKPDVAEIEDAKEAKDDEEKEDKEKEDDKGGDGKKEE) show a composition bias toward basic and acidic residues. Acidic residues predominate over residues 196-209 (EKDDEGEAETEEEV). 2 stretches are compositionally biased toward basic and acidic residues: residues 210 to 387 (KEQQ…NEDR) and 413 to 429 (NKDF…VSTV).

The protein belongs to the HMGN family. Expressed in trophoblast giant cells.

It is found in the nucleus. Preferentially binds to euchromatin and modulates cellular transcription by counteracting linker histone-mediated chromatin compaction. The protein is High mobility group nucleosome-binding domain-containing protein 5 of Rattus norvegicus (Rat).